The primary structure comprises 304 residues: MSGGLDVLQMKEEDVLKFLAAGTHLGGTNLDFQMDQYVYKRKSDGVYIINLKKTWEKLLLAARAIVAIENPADVCVISSRNTGQRAVLKFASATGATTFHGRFTPGTFTNQIQAAFREPRLLIVTDPRADHQPLTEASYVNIPTIALCNTDSPLRYVDIAIPCNNKGHHSVGLMWWMLAREVLRMRGTISREHPWEVMPDLYFYRDPEEIEKEEQAAAEKAVGKEEFQGEWSAPAAEFTQPEVADWSEGVAVPSVPIQQFPAGTPAPAPAVKTEDWSTQPATEDWSTAPTAQASDWGGATSDWS.

An N-acetylserine modification is found at serine 2. 2 laminin-binding regions span residues 161-180 (IPCN…MLAR) and 205-229 (RDPE…EFQG). [DE]-W-[ST] repeat units follow at residues 230–232 (EWS), 245–247 (DWS), 275–277 (DWS), 284–286 (DWS), and 302–304 (DWS). Positions 242–304 (EVADWSEGVA…DWGGATSDWS (63 aa)) are laminin-binding. The disordered stretch occupies residues 257–304 (IQQFPAGTPAPAPAVKTEDWSTQPATEDWSTAPTAQASDWGGATSDWS). The segment covering 276-293 (WSTQPATEDWSTAPTAQA) has biased composition (polar residues).

Belongs to the universal ribosomal protein uS2 family. As to quaternary structure, monomer (37LRP) and homodimer (67LR). Component of the small ribosomal subunit. Mature ribosomes consist of a small (40S) and a large (60S) subunit. The 40S subunit contains about 33 different proteins and 1 molecule of RNA (18S). The 60S subunit contains about 49 different proteins and 3 molecules of RNA (28S, 5.8S and 5S). Interacts with rps21. Interacts with several laminins including at least lamb1. Interacts with mdk. In terms of processing, acylated. Acylation may be a prerequisite for conversion of the monomeric 37 kDa laminin receptor precursor (37LRP) to the mature dimeric 67 kDa laminin receptor (67LR), and may provide a mechanism for membrane association. Cleaved by stromelysin-3 (ST3) at the cell surface. Cleavage by stromelysin-3 may be a mechanism to alter cell-extracellular matrix interactions.

Its subcellular location is the cell membrane. The protein resides in the cytoplasm. It is found in the nucleus. Functionally, required for the assembly and/or stability of the 40S ribosomal subunit. Required for the processing of the 20S rRNA-precursor to mature 18S rRNA in a late step of the maturation of 40S ribosomal subunits. Also functions as a cell surface receptor for laminin. Plays a role in cell adhesion to the basement membrane and in the consequent activation of signaling transduction pathways. May play a role in cell fate determination and tissue morphogenesis. This is Small ribosomal subunit protein uS2 (rpsa) from Sparus aurata (Gilthead sea bream).